Consider the following 896-residue polypeptide: MTQSLGIEQYKLSVVSGGKPALNNLSSVTGNKNIARLSQDQRNYIIPFNNQIKVYSVETRQCVKTLKFANNSLLSGIFLQEEENNESIVKILLGDITVPQQEDAHLITVFTNNGHVIVLNYKGKLVESPKHFKISLADEKLANVFHSEGNYRILTTFKDPSQKAHNSLQSYRLYALTFDDAKKQFEVAHQAEWHNVILSNISSNGKLLAHMCKDVSTKDHEHKSISVVSLFDDSVNLSFPLGSILSSQTQSLSYNTRYVSSMAIDNMGQQLAVGFASGVISIVSLADLQIRLLKWHIDSVLSLSFSHDGSYLLSGGWEKVMSLWQLETNSQQFLPRLNGIIIDCQVLGPQGNYYSLILQMTENNSNSDYQFLLLNASDLTSKLSINGPLPVFNSTIKHIQQPISAMNTKNSNSITSLNHSKKKQSRKLIKSRRQDFTTNVEINPINKNLYFPHISAVQIFDFYKNEQVNYQYLTSGVNNSMGKVRFELNLQDPIITDLKFTKDGQWMITYEIEYPPNDLLSSKDLTHILKFWTKNDNETNWNLKTKVINPHGISVPITKILPSPRSVNNSQGCLTADNNGGLKFWSFDSHESNWCLKKISLPNFNHFSNSVSLAWSQDGSLIFHGFDDKLQILDFDTFKKFESLENTKTVSEFTLDSEIQTVKLINDTNLIVATRTTLNAINLLRGQVINSFDLYPFVNGVYKNGHMDRLITCDERTGNIALVINQQLTDLDGVPTINYKSRIIIFDSDLSTKLGNFTHHEYISWIGWNYDTDFIFLDIESTLGVVGTTVNTQLSDEVNNEGILDGLVSNTITTSASNSDIFAEQLHKLSSRGKKSDTRDKNTNDNDEDEEDIALEFINGEKKDKLVNMNSFTSMFDNIQNVQMDTFFDRVMKVLT.

4 WD repeats span residues 295-334 (WHID…QQFL), 490-542 (LQDP…TNWN), 552-595 (GISV…SNWC), and 605-645 (NHFS…ESLE).

Interacts with snoRNA U3. Interacts with MPP10. Component of the ribosomal small subunit (SSU) processome composed of at least 40 protein subunits and snoRNA U3. In the absence of snoRNA3, forms a complex with other t-UTPs. This complex can associate with pre-18S ribosomal RNAs.

It localises to the nucleus. Its subcellular location is the nucleolus. Functionally, involved in nucleolar processing of pre-18S ribosomal RNA. Required for optimal pre-ribosomal RNA transcription by RNA polymerase I together with a subset of U3 proteins required for transcription (t-UTPs). The chain is NET1-associated nuclear protein 1 (NAN1) from Saccharomyces cerevisiae (strain ATCC 204508 / S288c) (Baker's yeast).